Consider the following 327-residue polypeptide: Cell division protein ZipA (327 aa).

Topologically, residues 1-5 are periplasmic; the sequence is MQDLR. The chain crosses the membrane as a helical span at residues 6–26; that stretch reads LILIVVGAIAIIALLLHGLWT. At 27–327 the chain is on the cytoplasmic side; it reads SRKERSSLFR…REVLDANTIA (301 aa). The span at 60–71 shows a compositional bias: basic and acidic residues; that stretch reads GEVRVRTSHPQE. The interval 60 to 182 is disordered; the sequence is GEVRVRTSHP…EPVAPAPEAK (123 aa). Composition is skewed to polar residues over residues 94–103 and 163–173; these read KSAQVKTASR and APQQHVESQQE.

Belongs to the ZipA family. Interacts with FtsZ via their C-terminal domains.

The protein resides in the cell inner membrane. Functionally, essential cell division protein that stabilizes the FtsZ protofilaments by cross-linking them and that serves as a cytoplasmic membrane anchor for the Z ring. Also required for the recruitment to the septal ring of downstream cell division proteins. The protein is Cell division protein ZipA of Yersinia pseudotuberculosis serotype O:1b (strain IP 31758).